The following is a 357-amino-acid chain: Elongation factor Ts (357 aa).

Residues 82 to 85 (TDFV) are involved in Mg(2+) ion dislocation from EF-Tu.

The protein belongs to the EF-Ts family.

The protein resides in the cytoplasm. Associates with the EF-Tu.GDP complex and induces the exchange of GDP to GTP. It remains bound to the aminoacyl-tRNA.EF-Tu.GTP complex up to the GTP hydrolysis stage on the ribosome. This is Elongation factor Ts from Campylobacter jejuni subsp. jejuni serotype O:2 (strain ATCC 700819 / NCTC 11168).